Here is a 355-residue protein sequence, read N- to C-terminus: UDP-3-O-acylglucosamine N-acyltransferase (355 aa).

The active-site Proton acceptor is the histidine 248.

Belongs to the transferase hexapeptide repeat family. LpxD subfamily. As to quaternary structure, homotrimer.

The enzyme catalyses a UDP-3-O-[(3R)-3-hydroxyacyl]-alpha-D-glucosamine + a (3R)-hydroxyacyl-[ACP] = a UDP-2-N,3-O-bis[(3R)-3-hydroxyacyl]-alpha-D-glucosamine + holo-[ACP] + H(+). The protein operates within bacterial outer membrane biogenesis; LPS lipid A biosynthesis. In terms of biological role, catalyzes the N-acylation of UDP-3-O-acylglucosamine using 3-hydroxyacyl-ACP as the acyl donor. Is involved in the biosynthesis of lipid A, a phosphorylated glycolipid that anchors the lipopolysaccharide to the outer membrane of the cell. The protein is UDP-3-O-acylglucosamine N-acyltransferase of Syntrophobacter fumaroxidans (strain DSM 10017 / MPOB).